The sequence spans 466 residues: Asparagine--tRNA ligase (466 aa).

This sequence belongs to the class-II aminoacyl-tRNA synthetase family. Homodimer.

The protein localises to the cytoplasm. The catalysed reaction is tRNA(Asn) + L-asparagine + ATP = L-asparaginyl-tRNA(Asn) + AMP + diphosphate + H(+). The protein is Asparagine--tRNA ligase of Shewanella sediminis (strain HAW-EB3).